A 187-amino-acid chain; its full sequence is Elongation factor P (187 aa).

It belongs to the elongation factor P family.

The protein localises to the cytoplasm. Its pathway is protein biosynthesis; polypeptide chain elongation. In terms of biological role, involved in peptide bond synthesis. Stimulates efficient translation and peptide-bond synthesis on native or reconstituted 70S ribosomes in vitro. Probably functions indirectly by altering the affinity of the ribosome for aminoacyl-tRNA, thus increasing their reactivity as acceptors for peptidyl transferase. In Leifsonia xyli subsp. xyli (strain CTCB07), this protein is Elongation factor P.